Consider the following 239-residue polypeptide: RBPJ-interacting and tubulin-associated protein 1 (239 aa).

A Nuclear export signal motif is present at residues 12–24; sequence LDLSITGHSTALP. Disordered stretches follow at residues 62-97 and 149-239; these read APPS…TPRK and LVQQ…PPWK. The Nuclear localization signal motif lies at 93–109; the sequence is GTPRKKIQYRVKSRTPS. The segment at 129–158 is interaction with RBPJ/RBPSUH; the sequence is WVKKEDTVKIRPLLWSPSPRLVQQSSMQNA. Composition is skewed to polar residues over residues 149–159 and 203–221; these read LVQQSSMQNAK and RQRQ…SCSG. Residues 158 to 239 form an interaction with tubulin region; that stretch reads AKQGPLRAVH…VKMQERPPWK (82 aa).

This sequence belongs to the RITA family. As to quaternary structure, interacts with rbpj/rbpsuh.

The protein resides in the cytoplasm. Its subcellular location is the nucleus. In terms of biological role, tubulin-binding protein that acts as a negative regulator of Notch signaling pathway. Shuttles between the cytoplasm and the nucleus and mediates the nuclear export of rbpj/rbpsuh, thereby preventing the interaction between rbpj/rbpsuh and NICD product of Notch proteins (Notch intracellular domain), leading to down-regulate Notch-mediated transcription. May play a role in neurogenesis. This is RBPJ-interacting and tubulin-associated protein 1 (rita1) from Xenopus laevis (African clawed frog).